The chain runs to 2710 residues: Serine/threonine-protein kinase ATR (2710 aa).

Positions 1647–2257 (TLAKASFRCQ…LWMMAAVSKS (611 aa)) constitute an FAT domain. The 313-residue stretch at 2368 to 2680 (IADDAEILNS…GVNAAPSLPL (313 aa)) folds into the PI3K/PI4K catalytic domain. Residues 2374-2380 (ILNSLQK) form a G-loop region. Residues 2545 to 2553 (GLGDRHGEN) form a catalytic loop region. The interval 2565–2589 (HVDFSCLFDKGLLLEKPEVVPFRFT) is activation loop. An FATC domain is found at 2678–2710 (LPLSVEGQARRLIAEAVSHSNLGKMYVWWMAWF).

It belongs to the PI3/PI4-kinase family. ATM subfamily.

It localises to the nucleus. It carries out the reaction L-seryl-[protein] + ATP = O-phospho-L-seryl-[protein] + ADP + H(+). It catalyses the reaction L-threonyl-[protein] + ATP = O-phospho-L-threonyl-[protein] + ADP + H(+). Its function is as follows. Probable serine/threonine kinase. Seems to play a central role in cell-cycle regulation by transmitting DNA damage signals to downstream effectors of cell-cycle progression. May recognize the substrate consensus sequence [ST]-Q and phosphorylate histone variant H2AX to form H2AXS139ph at sites of DNA damage, thereby regulating DNA damage response mechanism. This is Serine/threonine-protein kinase ATR from Oryza sativa subsp. japonica (Rice).